The sequence spans 147 residues: Ribonuclease H (147 aa).

Positions 1 to 142 constitute an RNase H type-1 domain; it reads MKKVSIYTDG…CDKLATDEIK (142 aa). The Mg(2+) site is built by D9, E47, D69, and D134.

It belongs to the RNase H family. Monomer. The cofactor is Mg(2+).

Its subcellular location is the cytoplasm. It catalyses the reaction Endonucleolytic cleavage to 5'-phosphomonoester.. In terms of biological role, endonuclease that specifically degrades the RNA of RNA-DNA hybrids. The protein is Ribonuclease H of Acetivibrio thermocellus (strain ATCC 27405 / DSM 1237 / JCM 9322 / NBRC 103400 / NCIMB 10682 / NRRL B-4536 / VPI 7372) (Clostridium thermocellum).